A 368-amino-acid polypeptide reads, in one-letter code: 1-aminocyclopropane-1-carboxylate synthase (368 aa).

Lys230 carries the post-translational modification N6-(pyridoxal phosphate)lysine.

This sequence belongs to the class-I pyridoxal-phosphate-dependent aminotransferase family. Homodimer. Pyridoxal 5'-phosphate is required as a cofactor.

It catalyses the reaction S-adenosyl-L-methionine = 1-aminocyclopropane-1-carboxylate + S-methyl-5'-thioadenosine + H(+). It functions in the pathway alkene biosynthesis; ethylene biosynthesis via S-adenosyl-L-methionine; ethylene from S-adenosyl-L-methionine: step 1/2. Catalyzes the formation of 1-aminocyclopropane-1-carboxylate, a direct precursor of ethylene in higher plants. This is 1-aminocyclopropane-1-carboxylate synthase (ACS5) from Vigna radiata var. radiata (Mung bean).